The chain runs to 219 residues: ATP-dependent dethiobiotin synthetase BioD (219 aa).

14 to 19 contacts ATP; the sequence is DVGKTY. Thr-18 contributes to the Mg(2+) binding site. Lys-37 is a catalytic residue. Ser-41 lines the substrate pocket. Residues Asp-54, 114 to 117, and 175 to 176 contribute to the ATP site; these read EGAG and NN. Mg(2+) contacts are provided by Asp-54 and Glu-114.

It belongs to the dethiobiotin synthetase family. As to quaternary structure, homodimer. The cofactor is Mg(2+).

It is found in the cytoplasm. It carries out the reaction (7R,8S)-7,8-diammoniononanoate + CO2 + ATP = (4R,5S)-dethiobiotin + ADP + phosphate + 3 H(+). The protein operates within cofactor biosynthesis; biotin biosynthesis; biotin from 7,8-diaminononanoate: step 1/2. Functionally, catalyzes a mechanistically unusual reaction, the ATP-dependent insertion of CO2 between the N7 and N8 nitrogen atoms of 7,8-diaminopelargonic acid (DAPA, also called 7,8-diammoniononanoate) to form a ureido ring. The chain is ATP-dependent dethiobiotin synthetase BioD from Fusobacterium nucleatum subsp. nucleatum (strain ATCC 25586 / DSM 15643 / BCRC 10681 / CIP 101130 / JCM 8532 / KCTC 2640 / LMG 13131 / VPI 4355).